The sequence spans 439 residues: Beta-1,3-galactosyl-O-glycosyl-glycoprotein beta-1,6-N-acetylglucosaminyltransferase (439 aa).

At 1–11 (MVGWKKKKLCR) the chain is on the cytoplasmic side. Residues 12 to 29 (GHHLWVLGCYMLLAVVSL) form a helical; Signal-anchor for type II membrane protein membrane-spanning segment. Residues 30 to 439 (RLSLRFKCDV…RHKAIYGTEL (410 aa)) are Lumenal-facing. N-linked (GlcNAc...) asparagine; by host glycans are attached at residues Asn71 and Asn107. 4 disulfide bridges follow: Cys72–Cys229, Cys163–Cys383, Cys184–Cys211, and Cys392–Cys424.

The protein belongs to the glycosyltransferase 14 family.

It localises to the host Golgi apparatus membrane. It catalyses the reaction a 3-O-[beta-D-galactosyl-(1-&gt;3)-N-acetyl-alpha-D-galactosaminyl]-L-seryl-[protein] + UDP-N-acetyl-alpha-D-glucosamine = 3-O-{beta-D-galactosyl-(1-&gt;3)-[N-acetyl-beta-D-glucosaminyl-(1-&gt;6)]-N-acetyl-alpha-D-galactosaminyl}-L-seryl-[protein] + UDP + H(+). The catalysed reaction is a 3-O-[beta-D-galactosyl-(1-&gt;3)-N-acetyl-alpha-D-galactosaminyl]-L-threonyl-[protein] + UDP-N-acetyl-alpha-D-glucosamine = a 3-O-{beta-D-galactosyl-(1-&gt;3)-[N-acetyl-beta-D-glucosaminyl-(1-&gt;6)]-N-acetyl-alpha-D-galactosaminyl}-L-threonyl-[protein] + UDP + H(+). The enzyme catalyses a beta-D-Gal-(1-&gt;4)-beta-D-GlcNAc-(1-&gt;3)-beta-D-Gal-(1-&gt;4)-beta-D-GlcNAc derivative + UDP-N-acetyl-alpha-D-glucosamine = a beta-D-Gal-(1-&gt;4)-beta-D-GlcNAc-(1-&gt;3)-[beta-D-GlcNAc-(1-&gt;6)]-beta-D-Gal-(1-&gt;4)-N-acetyl-beta-D-glucosaminyl derivative + UDP + H(+). It carries out the reaction 3-O-[N-acetyl-beta-D-glucosaminyl-(1-&gt;3)-N-acetyl-alpha-D-galactosaminyl]-L-seryl-[protein] + UDP-N-acetyl-alpha-D-glucosamine = 3-O-[N-acetyl-beta-D-glucosaminyl-(1-&gt;3)-[N-acetyl-beta-D-glucosaminyl-(1-&gt;6)]-N-acetyl-alpha-D-galactosaminyl]-L-seryl-[protein] + UDP + H(+). It catalyses the reaction a 3-O-[N-acetyl-beta-D-glucosaminyl-(1-&gt;3)-N-acetyl-alpha-D-galactosaminyl]-L-threonyl-[protein] + UDP-N-acetyl-alpha-D-glucosamine = 3-O-[N-acetyl-beta-D-glucosaminyl-(1-&gt;3)-[N-acetyl-beta-D-glucosaminyl-(1-&gt;6)]-N-acetyl-alpha-D-galactosaminyl]-L-threonyl-[protein] + UDP + H(+). Its pathway is protein modification; protein glycosylation. Its function is as follows. Non-essential glycosyltransferase that can synthesize all known mucin beta 6 N-acetylglucosaminides. Mediates core 2 and core 4 O-glycan branching, 2 important steps in mucin-type biosynthesis. Has also I-branching enzyme activity by converting linear into branched poly-N-acetyllactosaminoglycans. Contributes to the post-translational modifications of structural proteins. This chain is Beta-1,3-galactosyl-O-glycosyl-glycoprotein beta-1,6-N-acetylglucosaminyltransferase (Bo17), found in Bovine herpesvirus 4 (BoHV-4).